A 229-amino-acid chain; its full sequence is Homeobox-leucine zipper protein HOX3 (229 aa).

Positions 1 to 82 (MMGATSPSGL…GPHRPKKLRL (82 aa)) are disordered. The segment covering 52 to 68 (GEEEEFPMGSVEEDEEE) has biased composition (acidic residues). The homeobox DNA-binding region spans 75 to 134 (HRPKKLRLSKEQSRLLEESFRLNHTLTPKQKEALAIKLKLRPRQVEVWFQNRRARTKLKQ). Residues 133–177 (KQTEMECEYLKRCFGSLTEENRRLQREVEELRAMRVAPPTVLSPH) form a leucine-zipper region. Residues 198–229 (AATGPPAVRPPPSSAAAAAPSPFHPRRPSAAF) form a disordered region.

It belongs to the HD-ZIP homeobox family. Class II subfamily. Homodimer. May form a heterodimer with HOX1, HOX2 or HOX7. Expressed in seedlings, roots, leaves, nodes, internodes, flowers and embryo.

Its subcellular location is the nucleus. Its function is as follows. Probable transcription repressor that binds to the DNA sequence 5'-CAAT[GC]ATTG-3'. The sequence is that of Homeobox-leucine zipper protein HOX3 (HOX3) from Oryza sativa subsp. indica (Rice).